Reading from the N-terminus, the 320-residue chain is Nicotianamine synthase 3 (320 aa).

The protein belongs to the nicotianamine synthase (NAS)-like family. As to expression, in shoots.

It carries out the reaction 3 S-adenosyl-L-methionine = nicotianamine + 3 S-methyl-5'-thioadenosine + 3 H(+). Its function is as follows. Synthesizes nicotianamine, a polyamine which serves as a sensor for the physiological iron status within the plant, and/or might be involved in the transport of iron. The protein is Nicotianamine synthase 3 (NAS3) of Arabidopsis thaliana (Mouse-ear cress).